Here is a 463-residue protein sequence, read N- to C-terminus: RuvB-like 2 (463 aa).

Ala2 carries the N-acetylalanine modification. Lys9 is covalently cross-linked (Glycyl lysine isopeptide (Lys-Gly) (interchain with G-Cter in SUMO2)). 77 to 84 (GQPGTGKT) provides a ligand contact to ATP. Ser437 carries the phosphoserine modification. Residues Lys444 and Lys456 each participate in a glycyl lysine isopeptide (Lys-Gly) (interchain with G-Cter in SUMO2) cross-link.

Belongs to the RuvB family. As to quaternary structure, forms homohexameric rings. Can form a dodecamer with RUVBL1 made of two stacked hexameric rings; however, even though RUVBL1 and RUVBL2 are present in equimolar ratio, the oligomeric status of each hexamer is not known. Oligomerization may regulate binding to nucleic acids and conversely, binding to nucleic acids may affect the dodecameric assembly. Interaction of the complex with DHX34 results in conformational changes of the N-terminus of the RUVBL2 subunits, resulting in loss of nucleotide binding ability and ATP hydrolysis of the complex. Interacts with the transcriptional activation domain of MYC. Interacts with ATF2. Component of the RNA polymerase II holoenzyme complex. May also act to bridge the LEF1/TCF1-CTNNB1 complex and TBP. Component of the NuA4 histone acetyltransferase complex which contains the catalytic subunit KAT5/TIP60 and the subunits EP400, TRRAP/PAF400, BRD8/SMAP, EPC1, DMAP1/DNMAP1, RUVBL1/TIP49, RUVBL2, ING3, actin, ACTL6A/BAF53A, MORF4L1/MRG15, MORF4L2/MRGX, MRGBP, YEATS4/GAS41, VPS72/YL1 and MEAF6. The NuA4 complex interacts with MYC and the adenovirus E1A protein. RUVBL2 interacts with EP400. Component of a NuA4-related complex which contains EP400, TRRAP/PAF400, SRCAP, BRD8/SMAP, EPC1, DMAP1/DNMAP1, RUVBL1/TIP49, RUVBL2, actin, ACTL6A/BAF53A, VPS72 and YEATS4/GAS41. Interacts with NPAT. Component of the chromatin-remodeling INO80 complex; specifically part of a complex module associated with the helicase ATP-binding and the helicase C-terminal domain of INO80. Component of some MLL1/MLL complex, at least composed of the core components KMT2A/MLL1, ASH2L, HCFC1/HCF1, WDR5 and RBBP5, as well as the facultative components BACC1, CHD8, E2F6, HSP70, INO80C, KANSL1, LAS1L, MAX, MCRS1, MGA, MYST1/MOF, PELP1, PHF20, PRP31, RING2, RUVB1/TIP49A, RUVB2/TIP49B, SENP3, TAF1, TAF4, TAF6, TAF7, TAF9 and TEX10. Interacts with IGHMBP2. Interacts with TELO2. Interacts with HINT1. Component of a SWR1-like complex. Component of the R2TP complex composed at least of RUVBL1, RUVBL2, RPAP3 and PIHD1. Component of the PAQosome complex which is responsible for the biogenesis of several protein complexes and which consists of R2TP complex members RUVBL1, RUVBL2, RPAP3 and PIH1D1, URI complex members PFDN2, PFDN6, PDRG1, UXT and URI1 as well as ASDURF, POLR2E and DNAAF10/WDR92. Interacts with ITFG1. Interacts with ZMYND10. Interacts with WAC; WAC positively regulates MTOR activity by promoting the assembly of the TTT complex composed of TELO2, TTI1 and TTI2 and the RUVBL complex composed of RUVBL1 and RUVBL2 into the TTT-RUVBL complex which leads to the dimerization of the mTORC1 complex and its subsequent activation. Forms a complex with APPL1 and APPL2. Interacts with ZNHIT2 (via HIT-type zinc finger) in the presence of ATP or ADP; shows a stronger interaction in the presence of ADP. The RUVBL1/RUVBL2 complex interacts with ZNHIT1 (via HIT-type zinc finger), ZNHIT3 (via HIT-type zinc finger), ZNHIT6 (via HIT-type zinc finger) and DDX59/ZNHIT5 (via HIT-type zinc finger) in the presence of ADP. Interacts with NOPCHAP1; the interaction is direct and disrupted upon ATP binding. Interacts with SMG1. In terms of assembly, (Microbial infection) Interacts with Mumps L polymerase; this interaction regulates the viral transcription. Ubiquitously expressed. Highly expressed in testis and thymus.

Its subcellular location is the nucleus matrix. The protein resides in the nucleus. It is found in the nucleoplasm. The protein localises to the cytoplasm. It localises to the membrane. Its subcellular location is the dynein axonemal particle. It carries out the reaction ATP + H2O = ADP + phosphate + H(+). In terms of biological role, possesses single-stranded DNA-stimulated ATPase and ATP-dependent DNA helicase (5' to 3') activity; hexamerization is thought to be critical for ATP hydrolysis and adjacent subunits in the ring-like structure contribute to the ATPase activity. Component of the NuA4 histone acetyltransferase complex which is involved in transcriptional activation of select genes principally by acetylation of nucleosomal histones H4 and H2A. This modification may both alter nucleosome -DNA interactions and promote interaction of the modified histones with other proteins which positively regulate transcription. This complex may be required for the activation of transcriptional programs associated with oncogene and proto-oncogene mediated growth induction, tumor suppressor mediated growth arrest and replicative senescence, apoptosis, and DNA repair. The NuA4 complex ATPase and helicase activities seem to be, at least in part, contributed by the association of RUVBL1 and RUVBL2 with EP400. NuA4 may also play a direct role in DNA repair when recruited to sites of DNA damage. Component of a SWR1-like complex that specifically mediates the removal of histone H2A.Z/H2AZ1 from the nucleosome. Proposed core component of the chromatin remodeling INO80 complex which exhibits DNA- and nucleosome-activated ATPase activity and catalyzes ATP-dependent nucleosome sliding. Plays an essential role in oncogenic transformation by MYC and also modulates transcriptional activation by the LEF1/TCF1-CTNNB1 complex. May also inhibit the transcriptional activity of ATF2. Involved in the endoplasmic reticulum (ER)-associated degradation (ERAD) pathway where it negatively regulates expression of ER stress response genes. May play a role in regulating the composition of the U5 snRNP complex. The sequence is that of RuvB-like 2 (RUVBL2) from Homo sapiens (Human).